The primary structure comprises 404 residues: Methyltransferase-like protein 22 (404 aa).

Disordered stretches follow at residues 60–102 (TDSG…SLQA) and 115–145 (QLDE…DKVH). Positions 68 to 78 (SHRDVHTKEPP) are enriched in basic and acidic residues. Residues 79-88 (SAETGSTGSP) show a composition bias toward low complexity. A Phosphoserine modification is found at serine 132.

This sequence belongs to the methyltransferase superfamily. METTL22 family. As to quaternary structure, interacts with members of the heat shock protein 90 and 70 families; these proteins probably are methylation substrates.

It localises to the nucleus. It carries out the reaction L-lysyl-[protein] + 3 S-adenosyl-L-methionine = N(6),N(6),N(6)-trimethyl-L-lysyl-[protein] + 3 S-adenosyl-L-homocysteine + 3 H(+). Functionally, protein N-lysine methyltransferase. Trimethylates KIN at Lys-135 (in vitro). In Homo sapiens (Human), this protein is Methyltransferase-like protein 22 (METTL22).